A 303-amino-acid polypeptide reads, in one-letter code: ATP-dependent Clp protease ATP-binding subunit CLPT3, chloroplastic (303 aa).

The transit peptide at 1-37 (MLLANAPHNGCSRLQQVTLLRASGAKLHRKRALTVVA) directs the protein to the chloroplast. Disordered stretches follow at residues 185-214 (ASTE…RDSD) and 278-303 (RDDN…DEYE).

The protein belongs to the ClpA/ClpB family.

The protein localises to the plastid. The protein resides in the chloroplast. Functionally, accessory protein regulating the assembly of the plastid Clp protease system. The chain is ATP-dependent Clp protease ATP-binding subunit CLPT3, chloroplastic from Chlamydomonas reinhardtii (Chlamydomonas smithii).